A 643-amino-acid polypeptide reads, in one-letter code: Immediate-early phosphoprotein 57 (643 aa).

Disordered regions lie at residues 1 to 180 (MAQK…GGCA) and 194 to 329 (TGWG…QCPP). Positions 24 to 52 (LDFSESEEEEEEEESSSESESDEDSDMEV) are enriched in acidic residues. 2 stretches are compositionally biased toward low complexity: residues 57–71 (QEAG…QPQQ) and 83–100 (QQPQ…QQQR). Basic and acidic residues predominate over residues 103–113 (KRGEESGDARP). Residues 162–171 (QQPQSQAAQP) show a composition bias toward low complexity. Basic and acidic residues predominate over residues 215–241 (RRGDEDRRSGRDRRRREGRERDRESRS). Residues 284–297 (AGPSQAQAAQAARA) show a composition bias toward low complexity. The segment covering 298–307 (PRQEQGERRQ) has biased composition (basic and acidic residues). Positions 320-329 (QQCPPQQCPP) are enriched in pro residues.

It belongs to the herpesviridae UL69 family.

In Equus caballus (Horse), this protein is Immediate-early phosphoprotein 57 (57).